We begin with the raw amino-acid sequence, 242 residues long: Cytochrome c oxidase subunit 2 (242 aa).

Over 1 to 30 the chain is Mitochondrial intermembrane; it reads MSFYGSRYFGDIVHGELGKDLFRYHGFVMM. The chain crosses the membrane as a helical span at residues 31–47; sequence VAVAVLVFVMYMGCVIL. Over 48-66 the chain is Mitochondrial matrix; it reads FTKFSYRHFLNRQRLEFWW. The chain crosses the membrane as a helical span at residues 67 to 83; that stretch reads TIVPMLMLVGLWXPSMI. At 84–242 the chain is on the mitochondrial intermembrane side; that stretch reads NLYYMEEVKR…YFVMWLEALN (159 aa). Residues H176, C211, E213, C215, H219, and M222 each coordinate Cu cation. E213 is a Mg(2+) binding site.

The protein belongs to the cytochrome c oxidase subunit 2 family. As to quaternary structure, component of the cytochrome c oxidase (complex IV, CIV), a multisubunit enzyme composed of a catalytic core of 3 subunits and several supernumerary subunits. The complex exists as a monomer or a dimer and forms supercomplexes (SCs) in the inner mitochondrial membrane with ubiquinol-cytochrome c oxidoreductase (cytochrome b-c1 complex, complex III, CIII). Cu cation serves as cofactor.

The protein localises to the mitochondrion inner membrane. It carries out the reaction 4 Fe(II)-[cytochrome c] + O2 + 8 H(+)(in) = 4 Fe(III)-[cytochrome c] + 2 H2O + 4 H(+)(out). Component of the cytochrome c oxidase, the last enzyme in the mitochondrial electron transport chain which drives oxidative phosphorylation. The respiratory chain contains 3 multisubunit complexes succinate dehydrogenase (complex II, CII), ubiquinol-cytochrome c oxidoreductase (cytochrome b-c1 complex, complex III, CIII) and cytochrome c oxidase (complex IV, CIV), that cooperate to transfer electrons derived from NADH and succinate to molecular oxygen, creating an electrochemical gradient over the inner membrane that drives transmembrane transport and the ATP synthase. Cytochrome c oxidase is the component of the respiratory chain that catalyzes the reduction of oxygen to water. Electrons originating from reduced cytochrome c in the intermembrane space (IMS) are transferred via the dinuclear copper A center (CU(A)) of subunit 2 and heme A of subunit 1 to the active site in subunit 1, a binuclear center (BNC) formed by heme A3 and copper B (CU(B)). The BNC reduces molecular oxygen to 2 water molecules using 4 electrons from cytochrome c in the IMS and 4 protons from the mitochondrial matrix. In Mytilus edulis (Blue mussel), this protein is Cytochrome c oxidase subunit 2 (COII).